A 799-amino-acid polypeptide reads, in one-letter code: RasGAP-activating-like protein 1 (799 aa).

C2 domains are found at residues 1–105 (MAKS…DSWI) and 116–231 (VQGE…NGWF). Residues D21, D27, D74, D76, D82, D149, D155, D202, D204, and D210 each contribute to the Ca(2+) site. The Ras-GAP domain maps to 316–544 (GLAGPFLDYL…SRVRDFLDQL (229 aa)). T400 carries the post-translational modification Phosphothreonine. One can recognise a PH domain in the interval 565–672 (TIVREGFLLK…WLSALRKASA (108 aa)). Residues 674-710 (NPGKLVACHPGAFRSGRWTCCLQAERSAAGCSRTHSA) form a Btk-type zinc finger. 4 residues coordinate Zn(2+): H682, C693, C694, and C704.

Requires Ca(2+) as cofactor.

Functionally, probable inhibitory regulator of the Ras-cyclic AMP pathway. Plays a role in dendrite formation by melanocytes. This Mus musculus (Mouse) protein is RasGAP-activating-like protein 1.